The following is a 338-amino-acid chain: Fe(3+)-binding periplasmic protein (338 aa).

The first 26 residues, 1 to 26 (MKLRISSLGPVALLASSMMLAFGAQA), serve as a signal peptide directing secretion. Fe cation-binding residues include H40, E88, Y224, and Y225.

This sequence belongs to the bacterial solute-binding protein 1 family. The complex is composed of two ATP-binding proteins (FbpC), two transmembrane proteins (FbpB) and a solute-binding protein (FbpA).

It is found in the periplasm. Its function is as follows. Part of the ABC transporter complex FbpABC (TC 3.A.1.10.1) involved in Fe(3+) ions import. This protein specifically binds Fe(3+) and is involved in its transmembrane transport. This Serratia marcescens protein is Fe(3+)-binding periplasmic protein (fbpA).